A 348-amino-acid chain; its full sequence is Protein RecA (348 aa).

Glycine 65–threonine 72 provides a ligand contact to ATP.

It belongs to the RecA family.

It localises to the cytoplasm. Functionally, can catalyze the hydrolysis of ATP in the presence of single-stranded DNA, the ATP-dependent uptake of single-stranded DNA by duplex DNA, and the ATP-dependent hybridization of homologous single-stranded DNAs. It interacts with LexA causing its activation and leading to its autocatalytic cleavage. The protein is Protein RecA of Vibrio natriegens.